Here is a 248-residue protein sequence, read N- to C-terminus: Probable phosphatase VS_II0429 (248 aa).

Zn(2+) contacts are provided by His-8, His-10, His-16, His-41, Glu-74, His-102, His-132, Asp-194, and His-196.

The protein belongs to the PHP family. Zn(2+) serves as cofactor.

The protein is Probable phosphatase VS_II0429 of Vibrio atlanticus (strain LGP32) (Vibrio splendidus (strain Mel32)).